A 146-amino-acid polypeptide reads, in one-letter code: Putative pre-16S rRNA nuclease (146 aa).

It belongs to the YqgF nuclease family.

It localises to the cytoplasm. Functionally, could be a nuclease involved in processing of the 5'-end of pre-16S rRNA. The sequence is that of Putative pre-16S rRNA nuclease from Paraburkholderia xenovorans (strain LB400).